A 136-amino-acid polypeptide reads, in one-letter code: Probable disulfide formation protein (136 aa).

A helical membrane pass occupies residues 7-26 (SYALYFAWAISCAGTLISIF). C36 and C39 are disulfide-bonded. Helical transmembrane passes span 41–60 (YQRICLFPLTVILGISAYRE) and 67–84 (YILPQAVLGLGISIYQVF). C96 and C101 form a disulfide bridge. The chain crosses the membrane as a helical span at residues 109–131 (SYVTIPMASVVAFGAIVCLLVLT).

This sequence belongs to the DsbB family. BdbC subfamily.

It is found in the cell inner membrane. Required for disulfide bond formation in some proteins. The polypeptide is Probable disulfide formation protein (Chlamydia pneumoniae (Chlamydophila pneumoniae)).